A 488-amino-acid chain; its full sequence is 3-octaprenyl-4-hydroxybenzoate carboxy-lyase (488 aa).

Residue Asn-172 coordinates Mn(2+). Prenylated FMN contacts are provided by residues 175 to 177, 189 to 191, and 194 to 195; these read IYR, RWL, and RG. Glu-238 contacts Mn(2+). Residue Asp-287 is the Proton donor of the active site.

This sequence belongs to the UbiD family. Homohexamer. Prenylated FMN serves as cofactor. The cofactor is Mn(2+).

It is found in the cell membrane. The catalysed reaction is a 4-hydroxy-3-(all-trans-polyprenyl)benzoate + H(+) = a 2-(all-trans-polyprenyl)phenol + CO2. Its pathway is cofactor biosynthesis; ubiquinone biosynthesis. Its function is as follows. Catalyzes the decarboxylation of 3-octaprenyl-4-hydroxy benzoate to 2-octaprenylphenol, an intermediate step in ubiquinone biosynthesis. This chain is 3-octaprenyl-4-hydroxybenzoate carboxy-lyase, found in Pseudomonas savastanoi pv. phaseolicola (strain 1448A / Race 6) (Pseudomonas syringae pv. phaseolicola (strain 1448A / Race 6)).